Consider the following 194-residue polypeptide: Probable GTP-binding protein EngB (194 aa).

The EngB-type G domain occupies 22-194; sequence DLPEYALAGR…AWQFIKEGME (173 aa). Residues 30-37, 57-61, 75-78, 142-145, and 174-176 contribute to the GTP site; these read GRSNVGKS, GKTQT, DVPG, TKAD, and FSS. Ser-37 and Thr-59 together coordinate Mg(2+).

The protein belongs to the TRAFAC class TrmE-Era-EngA-EngB-Septin-like GTPase superfamily. EngB GTPase family. The cofactor is Mg(2+).

Functionally, necessary for normal cell division and for the maintenance of normal septation. This Listeria monocytogenes serotype 4b (strain CLIP80459) protein is Probable GTP-binding protein EngB.